We begin with the raw amino-acid sequence, 846 residues long: MAVGLRRSDSIADMMPEALRQSRYQMKRCFQRYVSQGKRLMKRQQLLDELDKSVDDKADKDQLLQGFLGYVISSTQEAAVLPPFVAFAVRMNPGIWEFVKVHSANLSVEQMTPSDYLKNKEALVDDKWGAYDDDSQLEVDFGALDLSTPHLTLPSSIGKGAHLVSRFMSSKLTDNKKPLLDYLLALSHRGDKLMINDILDTVDKLQTALLLAEVYVAGLHPDTNYSEFEQKFQEWGLEKGWGDTAETCKETLSSLSEVLQAPDPINMEKFFSTVPCVFTVVIFSIHGYFGQEKVLGMPDTGGQVVYILDQVRALEDELLQRIKQQGLNATPKILVLTRLIPEAKGTKCNVELEPIENTKHSNILRVPFKTEDGKVLPQWVSRFDIYPYLERYAQDSSVKILEILEGKPDLVIGNYTDGNLVASLLTSKLGVTQGTIAHALEKTKYEDSDIKWRELDHKYHFSCQFTADMIAMNTSDFIIASTYQEIAGSKEKPGQYESHYAFTMPGLCRYATGINVFDPKFNIAAPGADQSVYFPFTQKQKRLTDLHPQIEELLYSKEDNNEHIGHLADRSKPIIFSMARLDKIKNITGLVEWYGQNKRLRDLVNLVIVGGLLDPSQSKDREEIEEINKMHSLINKYQLVGQIRWIKGQTDRVRNGELYRCIADTKGAFVQPALYEAFGLTVIEAMNCGLPTFATNQGGPAEIIVDEVSGFHINPLNGKEASDKIADFFQKCKEDLIYWSKMSTAGLQRIYECYTWQIYATKVLNMASIYGFWRTLDKEERQAKQHYLHMFYNLQFRKLAKNVPTLGEQPAQPTESAEPNRIIPRPKERQVCPFLRNLLKKETGNN.

Residues 276–755 (CVFTVVIFSI…GLQRIYECYT (480 aa)) are GT-B glycosyltransferase.

Belongs to the glycosyltransferase 1 family. Plant sucrose synthase subfamily.

The catalysed reaction is an NDP-alpha-D-glucose + D-fructose = a ribonucleoside 5'-diphosphate + sucrose + H(+). Functionally, sucrose-cleaving enzyme that provides UDP-glucose and fructose for various metabolic pathways. In Oryza sativa subsp. japonica (Rice), this protein is Sucrose synthase 6 (SUS6).